Here is an 899-residue protein sequence, read N- to C-terminus: MPQVDPDLFDPGQFQAELALKSSPIPAYKKALRCAREVLDARFQEGRDIRRLIEDRAWFVDQILALAWNRFDWSEDADIALIAVGGYGRGELHPYSDIDLLILMDGADHEVFREPIEGFLTLLWDIGLEVGQSVRSLAECAEEAQADLTVITNLMESRTIAGPEHLRQRMQEVTSAQRMWPSRAFFLAKRDEQKTRHARYNDTEYNLEPNVKGSPGGLRDIQTLLWIARRQFGTINLHAMVGQGFLLESEYTLLASSQEFLWKVRYALHMLAGRAEDRLLFDLQRQIAGLLGYEDSDAKLAVERFMQKYYRVVLGIAELTELVFQHFEEVILPGDAAGRVEPLNERFQVRDGYLEVTHAGVFQETPSALLEIFVLLARRPEIRGVRADTIRLLRDHRYLIDDAFRRDPHNTGLFIELFKSRQGIHRNLRRMNRYGILGRYLPEFGHIVGQMQHDLFHIYTVDAHTLNLIKNLRKLFWPELAEKYPLASKLIEKLPKPELIYLAGLYHDIGKGRGGDHSELGAADALAFCQRHDLPAMDTQLIVWLVRNHLLMSTTAQRKDLSDPQVIFDFAQKVRDQTYLDYLYVLTVADINATNPTLWNSWRASLLRQLYTETKHALRRGLEQPVGREEQIRQTQKAALDILVRSGTDPDDAEHLWTQLGDDYFLRHTSSDIAWHTEAILQHPSSGGPLVLIKETTQREFEGATQIFIYAPDQHDFFAVTVAAMDQLNLSIHDARVITSTSQFTLDTYIVLDADGGSIGNNPARIQEIRQGLVEALRNPADYPTIIQRRVPRQLKHFAFAPQVTIQNDALRPVTILEIIAPDRPGLLARIGKIFLDFDLSLQNAKIATLGERVEDVFFVTDAHNQPLSDPELCARLQLAIAEQLADGDSYIQPSRISI.

Positions 1–342 are uridylyltransferase; sequence MPQVDPDLFD…PGDAAGRVEP (342 aa). Residues 343–705 are uridylyl-removing; the sequence is LNERFQVRDG…TTQREFEGAT (363 aa). An HD domain is found at 461–583; sequence VDAHTLNLIK…VRDQTYLDYL (123 aa). 2 ACT domains span residues 706–789 and 816–899; these read QIFI…IIQR and ILEI…RISI.

Belongs to the GlnD family. It depends on Mg(2+) as a cofactor.

It catalyses the reaction [protein-PII]-L-tyrosine + UTP = [protein-PII]-uridylyl-L-tyrosine + diphosphate. The catalysed reaction is [protein-PII]-uridylyl-L-tyrosine + H2O = [protein-PII]-L-tyrosine + UMP + H(+). Uridylyltransferase (UTase) activity is inhibited by glutamine, while glutamine activates uridylyl-removing (UR) activity. Its function is as follows. Modifies, by uridylylation and deuridylylation, the PII regulatory proteins (GlnB and homologs), in response to the nitrogen status of the cell that GlnD senses through the glutamine level. Under low glutamine levels, catalyzes the conversion of the PII proteins and UTP to PII-UMP and PPi, while under higher glutamine levels, GlnD hydrolyzes PII-UMP to PII and UMP (deuridylylation). Thus, controls uridylylation state and activity of the PII proteins, and plays an important role in the regulation of nitrogen fixation and metabolism. This chain is Bifunctional uridylyltransferase/uridylyl-removing enzyme, found in Azotobacter vinelandii (strain DJ / ATCC BAA-1303).